We begin with the raw amino-acid sequence, 156 residues long: SsrA-binding protein (156 aa).

A disordered region spans residues 134–156 (RQTLREQQDKRESLRELRERNRR).

It belongs to the SmpB family.

Its subcellular location is the cytoplasm. Required for rescue of stalled ribosomes mediated by trans-translation. Binds to transfer-messenger RNA (tmRNA), required for stable association of tmRNA with ribosomes. tmRNA and SmpB together mimic tRNA shape, replacing the anticodon stem-loop with SmpB. tmRNA is encoded by the ssrA gene; the 2 termini fold to resemble tRNA(Ala) and it encodes a 'tag peptide', a short internal open reading frame. During trans-translation Ala-aminoacylated tmRNA acts like a tRNA, entering the A-site of stalled ribosomes, displacing the stalled mRNA. The ribosome then switches to translate the ORF on the tmRNA; the nascent peptide is terminated with the 'tag peptide' encoded by the tmRNA and targeted for degradation. The ribosome is freed to recommence translation, which seems to be the essential function of trans-translation. The chain is SsrA-binding protein from Paenarthrobacter aurescens (strain TC1).